The primary structure comprises 659 residues: MRNCKELKHEKNGNVTEKIGKNKGKSKKVSKDESLLSFDLFLEGKEHSAYKFMGAHFVTENRKRGVRFTTWAPRSSKIYVIGDFNNWELKEEYSMKKINERGIWSLFLPKLEEGIKYKFAVVNECGNNTVYKADPYAFKSELRPNTASVLTKIKSFRWGDKRWLNKREKEGLDNKPMNIYELHLGSWKRKDGEFMTYEEISEVLVEYVKEMGYTHVEFMPINEHPLDASWGYQGVGYYSVTSRYGDLNGLKALINKLHKNNIGVLLDWVPSHFCKDEHGLFMFDGSPTYEYGAWWKANNEGWGTCNFDLGRPEVKSFLFSNAMYWINEFHIDGLRVDAVSNMLYLDYGREYGEWEPNIYGGNGNLEAIAFLKELNTIIKKEGKGAITVAEESTSWEGITKPVEEDGLGFDYKWNMGWMNDTLSYIELDPIYRKYHHNKMNFSMMYNYSEKFILPISHDEVVHGKKSLINKMWGDDWKKYAGLRLYASFMMGHPGKKLMFMGCEFGQFVEWREWEELQWNIIEEFDIHKKTQEYFKALNHFYLENSSLWSLDYEEEGFKWIDADNSEESVLSFIRIGKNKKEKLIFICNFTPEVYYDFKVGVPELGEYVEVFNSDSLEFGGAGNIMGDSILKATEESFKDFDYSIIVKVPPLGTLVLKVK.

Over residues 1 to 12 the composition is skewed to basic and acidic residues; it reads MRNCKELKHEKN. The interval 1–25 is disordered; the sequence is MRNCKELKHEKNGNVTEKIGKNKGK. Catalysis depends on aspartate 337, which acts as the Nucleophile. Glutamate 390 (proton donor) is an active-site residue.

The protein belongs to the glycosyl hydrolase 13 family. GlgB subfamily. As to quaternary structure, monomer.

The catalysed reaction is Transfers a segment of a (1-&gt;4)-alpha-D-glucan chain to a primary hydroxy group in a similar glucan chain.. It participates in glycan biosynthesis; glycogen biosynthesis. In terms of biological role, catalyzes the formation of the alpha-1,6-glucosidic linkages in glycogen by scission of a 1,4-alpha-linked oligosaccharide from growing alpha-1,4-glucan chains and the subsequent attachment of the oligosaccharide to the alpha-1,6 position. The chain is 1,4-alpha-glucan branching enzyme GlgB from Clostridium perfringens (strain ATCC 13124 / DSM 756 / JCM 1290 / NCIMB 6125 / NCTC 8237 / Type A).